A 298-amino-acid chain; its full sequence is GPN-loop GTPase QQT1 (298 aa).

Glycine 12–threonine 17 contacts GTP. The Gly-Pro-Asn (GPN)-loop; involved in dimer interface signature appears at glycine 69–asparagine 71. Serine 173–aspartate 176 contacts GTP.

It belongs to the GPN-loop GTPase family. As to quaternary structure, heterodimer with QQT2. Expressed in vascular tissues, root tips, apical and root meristematic regions, and floral primordia.

Its subcellular location is the cytoplasm. The protein localises to the nucleus. It localises to the cytoskeleton. It is found in the spindle. The protein resides in the phragmoplast. In terms of biological role, small GTPase that is essential for the correct formation of the tangential divisions in early embryos. Associates with microtubule during mitosis and may function in the positioning of the division plane. May participate in the patterning of the early embryo at the octant-dermatogen transition. Is crucial for normal development of the plant. In Arabidopsis thaliana (Mouse-ear cress), this protein is GPN-loop GTPase QQT1.